The primary structure comprises 108 residues: FK506-binding protein 1A (108 aa).

Positions 1-20 (MGVEVQRISPGDGKNFPKPG) are disordered. In terms of domain architecture, PPIase FKBP-type spans 20 to 108 (GDTVSIHYTG…TFEVELLKIN (89 aa)).

Belongs to the FKBP-type PPIase family. FKBP1 subfamily.

It is found in the cytoplasm. It catalyses the reaction [protein]-peptidylproline (omega=180) = [protein]-peptidylproline (omega=0). Inhibited by both FK506 and rapamycin. In terms of biological role, PPIases accelerate the folding of proteins. It catalyzes the cis-trans isomerization of proline imidic peptide bonds in oligopeptides. This chain is FK506-binding protein 1A (fprA), found in Emericella nidulans (strain FGSC A4 / ATCC 38163 / CBS 112.46 / NRRL 194 / M139) (Aspergillus nidulans).